The chain runs to 197 residues: Xanthine phosphoribosyltransferase (197 aa).

Positions 20 and 27 each coordinate xanthine. 128 to 132 (ANGQA) is a binding site for 5-phospho-alpha-D-ribose 1-diphosphate. Residue Lys156 participates in xanthine binding.

Belongs to the purine/pyrimidine phosphoribosyltransferase family. Xpt subfamily. Homodimer.

It localises to the cytoplasm. It catalyses the reaction XMP + diphosphate = xanthine + 5-phospho-alpha-D-ribose 1-diphosphate. Its pathway is purine metabolism; XMP biosynthesis via salvage pathway; XMP from xanthine: step 1/1. Functionally, converts the preformed base xanthine, a product of nucleic acid breakdown, to xanthosine 5'-monophosphate (XMP), so it can be reused for RNA or DNA synthesis. The polypeptide is Xanthine phosphoribosyltransferase (Bacillus thuringiensis (strain Al Hakam)).